The primary structure comprises 72 residues: uncharacterized protein (72 aa).

Residues 41 to 58 (FSFLVHIMCGLTLTSYVI) form a helical membrane-spanning segment.

Its subcellular location is the membrane. This is an uncharacterized protein from Dictyostelium discoideum (Social amoeba).